We begin with the raw amino-acid sequence, 168 residues long: NADH-quinone oxidoreductase subunit I (168 aa).

4Fe-4S ferredoxin-type domains lie at 58 to 88 and 99 to 128; these read LRRY…IEAG and VRYD…EGPN. [4Fe-4S] cluster-binding residues include Cys-68, Cys-71, Cys-74, Cys-78, Cys-108, Cys-111, Cys-114, and Cys-118.

It belongs to the complex I 23 kDa subunit family. NDH-1 is composed of 14 different subunits. Subunits NuoA, H, J, K, L, M, N constitute the membrane sector of the complex. It depends on [4Fe-4S] cluster as a cofactor.

The protein resides in the cell inner membrane. It catalyses the reaction a quinone + NADH + 5 H(+)(in) = a quinol + NAD(+) + 4 H(+)(out). Its function is as follows. NDH-1 shuttles electrons from NADH, via FMN and iron-sulfur (Fe-S) centers, to quinones in the respiratory chain. The immediate electron acceptor for the enzyme in this species is believed to be ubiquinone. Couples the redox reaction to proton translocation (for every two electrons transferred, four hydrogen ions are translocated across the cytoplasmic membrane), and thus conserves the redox energy in a proton gradient. This is NADH-quinone oxidoreductase subunit I from Bradyrhizobium diazoefficiens (strain JCM 10833 / BCRC 13528 / IAM 13628 / NBRC 14792 / USDA 110).